A 263-amino-acid polypeptide reads, in one-letter code: Reductase pytE (263 aa).

It belongs to the avfA family.

It participates in secondary metabolite biosynthesis. Its function is as follows. Reductase; part of the gene cluster that mediates the biosynthesis of pyranterreones, a family of antioxidative compounds. The first step of pyranonigrins biosynthesis is performed by the hybrid PKS-NRPS synthetase pytA that condenses 4 malonyl-CoA units ato the acetyl starter unit by the modular PKS of pytA. The acyl chain is then connected to an L-serine through the amide bond by the modular NRPS of pytA. A tetramic acid is formed and released from the PKS-NRPS pytA to give pyranterreone 5 with the help of the thioesterase pytI. Pyranterreone 5 could be methylated by pytC to afford pyranterreone 6. Both pyranterreones 5 and 6 are subsequently oxidized by the FAD-linked oxidoreductase pytB and the cytochrome P450 monooxygenase pytD to form the fused gamma-pyrone core, resulting in pyranterreones 7 and 11, respectively. The hydroxy group at C-8 of pyranterreones 7 and 11 are dehydrated by the aspartyl protease pytH to form a delta-7 double bond to give pyranterreones 3 and 1, 2 accordingly. The exo-methylene of pyranterreone 3 could be reduced into a pendant methyl by reductase pytE to provide pyranterreone 4, also known as cordylactam. Pyranterreone 4 can be reconverted to pyranterreone 3 through pytB-catalyzed dehydrogenation or further oxidized to pyranterreones 9 and 10. The protein is Reductase pytE of Aspergillus terreus.